A 274-amino-acid polypeptide reads, in one-letter code: MSRPILVFDSGIGGLSVLAEIRKSLPHSDYCYLFDNARLPYGELEEQVLIAGCVALVCDLVARTNAMIVVVACNTASTVVLPALRANLSIPVVGVVPAIKPAAQMSKSKRIGLLATPGTVKRHYTHELISQFADDCHVELFGCSELVMMAEQKIATGEMDMHRLADLLAPVVAAQLDVLVLGCTHFPMIQAELQQVLGAGVTLMDSGAAIAKRVVTLLTQQNLIVEQRRVTNEREALGQSVMQAFYTKAEISEGLTTTLIDCGFSTIERITTTN.

Residues 9-10 and 41-42 contribute to the substrate site; these read DS and YG. Residue Cys-73 is the Proton donor/acceptor of the active site. 74-75 lines the substrate pocket; it reads NT. The active-site Proton donor/acceptor is Cys-183. Residue 184–185 coordinates substrate; that stretch reads TH.

It belongs to the aspartate/glutamate racemases family.

It catalyses the reaction L-glutamate = D-glutamate. It participates in cell wall biogenesis; peptidoglycan biosynthesis. Functionally, provides the (R)-glutamate required for cell wall biosynthesis. The protein is Glutamate racemase of Shewanella baltica (strain OS195).